The chain runs to 289 residues: Ribosomal protein L11 methyltransferase (289 aa).

S-adenosyl-L-methionine contacts are provided by Thr142, Gly163, Asp185, and Asn226.

This sequence belongs to the methyltransferase superfamily. PrmA family.

It is found in the cytoplasm. The enzyme catalyses L-lysyl-[protein] + 3 S-adenosyl-L-methionine = N(6),N(6),N(6)-trimethyl-L-lysyl-[protein] + 3 S-adenosyl-L-homocysteine + 3 H(+). Its function is as follows. Methylates ribosomal protein L11. The polypeptide is Ribosomal protein L11 methyltransferase (Legionella pneumophila subsp. pneumophila (strain Philadelphia 1 / ATCC 33152 / DSM 7513)).